The chain runs to 340 residues: Serine racemase (340 aa).

A Mg(2+)-binding site is contributed by E13. Positions 31, 32, 33, 51, and 52 each coordinate ATP. The active-site Proton acceptor is K56. K56 is subject to N6-(pyridoxal phosphate)lysine. 2 residues coordinate Ca(2+): P69 and T81. S84 acts as the Proton acceptor in catalysis. Position 86 (N86) interacts with pyridoxal 5'-phosphate. Q89 provides a ligand contact to ATP. C113 carries the S-nitrosocysteine modification. Y121 is an ATP binding site. Pyridoxal 5'-phosphate is bound at residue N154. Position 178 (D178) interacts with Mg(2+). Residues G185, G186, G187, G188, and M189 each contribute to the pyridoxal 5'-phosphate site. E210, A214, D216, and N247 together coordinate Mg(2+). 4 residues coordinate Ca(2+): E210, A214, D216, and N247. Positions 210, 214, and 216 each coordinate Mn(2+). Residue K279 participates in ATP binding. Residue S313 coordinates pyridoxal 5'-phosphate. Residue N316 participates in ATP binding.

Belongs to the serine/threonine dehydratase family. Homodimer. The cofactor is Mg(2+). Mn(2+) is required as a cofactor. Ca(2+) serves as cofactor. Requires pyridoxal 5'-phosphate as cofactor. Post-translationally, S-nitrosylated, leading to decrease the enzyme activity. Expressed in the cerebellum, hippocampus, dorsolateral prefrontal cortex, and in motor neurons and glial cells of the lumbar spinal cord (at protein level). Increased in the dorsolateral prefrontal cortex of schizophrenic patients (at protein level). Brain: expressed at high levels in hippocampus and corpus callosum, intermediate levels in substantia nigra and caudate, and low levels in amygdala, thalamus, and subthalamic nuclei. Expressed in heart, skeletal muscle, kidney, and liver.

It catalyses the reaction L-serine = D-serine. It carries out the reaction D-serine = pyruvate + NH4(+). The enzyme catalyses L-serine = pyruvate + NH4(+). Its activity is regulated as follows. Allosterically activated by magnesium, and possibly also other divalent metal cations. Allosterically activated by ATP, ADP or GTP. Competitively inhibited by malonate. Inhibited by meso-tartrate and malonate. Catalyzes the synthesis of D-serine from L-serine. D-serine is a key coagonist with glutamate at NMDA receptors. Has dehydratase activity towards both L-serine and D-serine. In Homo sapiens (Human), this protein is Serine racemase (SRR).